The primary structure comprises 235 residues: Uridylate kinase (235 aa).

An ATP-binding site is contributed by 9–12 (KLSG). The segment at 17-22 (GKDGYG) is involved in allosteric activation by GTP. Glycine 51 is a binding site for UMP. Glycine 52 and arginine 56 together coordinate ATP. UMP is bound by residues aspartate 71 and 132–139 (TGNPYFTT). Threonine 159, tyrosine 165, and aspartate 168 together coordinate ATP.

It belongs to the UMP kinase family. Homohexamer.

The protein resides in the cytoplasm. The catalysed reaction is UMP + ATP = UDP + ADP. Its pathway is pyrimidine metabolism; CTP biosynthesis via de novo pathway; UDP from UMP (UMPK route): step 1/1. With respect to regulation, allosterically activated by GTP. Inhibited by UTP. Catalyzes the reversible phosphorylation of UMP to UDP. The protein is Uridylate kinase of Chlorobium luteolum (strain DSM 273 / BCRC 81028 / 2530) (Pelodictyon luteolum).